Here is a 108-residue protein sequence, read N- to C-terminus: Nucleoid-associated protein Rmet_2128 (108 aa).

A compositionally biased stretch (polar residues) spans 86–96; sequence TTQEKMGSMTS. Residues 86–108 form a disordered region; it reads TTQEKMGSMTSGLPLPPGFKLPF. Positions 99 to 108 are enriched in pro residues; sequence PLPPGFKLPF.

The protein belongs to the YbaB/EbfC family. Homodimer.

The protein resides in the cytoplasm. It is found in the nucleoid. Functionally, binds to DNA and alters its conformation. May be involved in regulation of gene expression, nucleoid organization and DNA protection. This chain is Nucleoid-associated protein Rmet_2128, found in Cupriavidus metallidurans (strain ATCC 43123 / DSM 2839 / NBRC 102507 / CH34) (Ralstonia metallidurans).